The primary structure comprises 409 residues: Threonine dehydratase-like protein AKTS1-1 (409 aa).

Residues 1–21 are disordered; sequence MADYLRQVMPENDSDSEALPR. Lysine 111 is modified (N6-(pyridoxal phosphate)lysine). Pyridoxal 5'-phosphate is bound by residues asparagine 138, 239–243, and serine 368; that span reads GEGSL.

Belongs to the serine/threonine dehydratase family. Pyridoxal 5'-phosphate is required as a cofactor.

Its pathway is mycotoxin biosynthesis. In terms of biological role, threonine dehydratase-like protein; part of the gene clusters that mediate the biosynthesis of the host-selective toxins (HSTs) AK-toxins responsible for Japanese pear black spot disease by the Japanese pear pathotype. AK-toxins are esters of 9,10-epoxy 8-hydroxy 9-methyldecatrienoic acid (EDA). On cellular level, AK-toxins affect plasma membrane of susceptible cells and cause a sudden increase in loss of K(+) after a few minutes of toxin treatment. The acyl-CoA ligase AKT1, the hydrolase AKT2 and enoyl-CoA hydratase AKT3 are all involved in the biosynthesis of the AK-, AF- and ACT-toxin common 9,10-epoxy-8-hydroxy-9-methyl-decatrienoic acid (EDA) structural moiety. Part of the EDA biosynthesis occurs in the peroxisome since these 3 enzymes are localized in peroxisomes. The exact roles of the 3 enzymes, as well as of additional AK-toxin clusters enzymes, including AKT4, AKT6 and AKTS1, have still to be elucidated. The Cytochrome P450 monooxygenase AKT7 on the other side functions to limit production of EDA and AK-toxin, probably via the catalysis of a side reaction of EDA or its precursor. This chain is Threonine dehydratase-like protein AKTS1-1, found in Alternaria alternata (Alternaria rot fungus).